The chain runs to 166 residues: Transcriptional repressor NrdR (166 aa).

Residues Cys3 to Cys34 fold into a zinc finger. An ATP-cone domain is found at Leu49–Lys139.

The protein belongs to the NrdR family. Requires Zn(2+) as cofactor.

Its function is as follows. Negatively regulates transcription of bacterial ribonucleotide reductase nrd genes and operons by binding to NrdR-boxes. The polypeptide is Transcriptional repressor NrdR (Chloroflexus aurantiacus (strain ATCC 29364 / DSM 637 / Y-400-fl)).